A 214-amino-acid chain; its full sequence is Protein DEHYDRATION-INDUCED 19 homolog 5 (214 aa).

S110 is modified (phosphoserine). Residues 148–185 (PKKSKLVQPDSSSEASMEDNSLIRDSTEKDWESPSPLS) form a disordered region. Polar residues predominate over residues 156 to 166 (PDSSSEASMED). Over residues 168–179 (SLIRDSTEKDWE) the composition is skewed to basic and acidic residues.

It belongs to the Di19 family. Phosphorylated in vitro by CPK3 or CPK11. In terms of tissue distribution, expressed in seedlings, roots, leaves, stems, flowers and siliques.

Its subcellular location is the nucleus. In Arabidopsis thaliana (Mouse-ear cress), this protein is Protein DEHYDRATION-INDUCED 19 homolog 5 (DI19-5).